The primary structure comprises 491 residues: Probable cytosol aminopeptidase (491 aa).

The Mn(2+) site is built by K264 and D269. K276 is a catalytic residue. Mn(2+) contacts are provided by D287, D346, and E348. The active site involves R350.

It belongs to the peptidase M17 family. The cofactor is Mn(2+).

Its subcellular location is the cytoplasm. The catalysed reaction is Release of an N-terminal amino acid, Xaa-|-Yaa-, in which Xaa is preferably Leu, but may be other amino acids including Pro although not Arg or Lys, and Yaa may be Pro. Amino acid amides and methyl esters are also readily hydrolyzed, but rates on arylamides are exceedingly low.. It catalyses the reaction Release of an N-terminal amino acid, preferentially leucine, but not glutamic or aspartic acids.. Its function is as follows. Presumably involved in the processing and regular turnover of intracellular proteins. Catalyzes the removal of unsubstituted N-terminal amino acids from various peptides. This chain is Probable cytosol aminopeptidase, found in Xylella fastidiosa (strain M12).